Reading from the N-terminus, the 715-residue chain is Protein psiH (715 aa).

An N-terminal signal peptide occupies residues 1–20 (MNYLKPTIFLILCLVTFVYS). Over 21–651 (QPSTLTIQGT…ICKTGAVVST (631 aa)) the chain is Extracellular. In terms of domain architecture, PA14 spans 115-256 (NYDSKKQVYV…YDYCGVCSGD (142 aa)). N-linked (GlcNAc...) asparagine glycans are attached at residues asparagine 149, asparagine 377, asparagine 528, and asparagine 622. A helical membrane pass occupies residues 652–672 (AVIAGVTVAGAVALGVFIYGG). Over 673–715 (KRGYDYWKESRNVQFSGSNSNPLYEQNPNGSGVNPLYNDNSAL) the chain is Cytoplasmic. A disordered region spans residues 690–715 (SNSNPLYEQNPNGSGVNPLYNDNSAL).

Belongs to the prespore-cell-inducing factor family.

Its subcellular location is the membrane. This is Protein psiH (psiH) from Dictyostelium discoideum (Social amoeba).